The sequence spans 364 residues: tRNA-specific 2-thiouridylase MnmA 1 (364 aa).

ATP contacts are provided by residues 10 to 17 (GMSGGVDS) and M36. C106 serves as the catalytic Nucleophile. The cysteines at positions 106 and 204 are disulfide-linked. Residue G130 coordinates ATP. The segment at 154–156 (KDQ) is interaction with tRNA. The active-site Cysteine persulfide intermediate is C204. The tract at residues 310–311 (RY) is interaction with tRNA.

This sequence belongs to the MnmA/TRMU family.

It is found in the cytoplasm. It carries out the reaction S-sulfanyl-L-cysteinyl-[protein] + uridine(34) in tRNA + AH2 + ATP = 2-thiouridine(34) in tRNA + L-cysteinyl-[protein] + A + AMP + diphosphate + H(+). Catalyzes the 2-thiolation of uridine at the wobble position (U34) of tRNA, leading to the formation of s(2)U34. In Thermoanaerobacter sp. (strain X514), this protein is tRNA-specific 2-thiouridylase MnmA 1.